Reading from the N-terminus, the 199-residue chain is 3-isopropylmalate dehydratase small subunit (199 aa).

The protein belongs to the LeuD family. LeuD type 1 subfamily. As to quaternary structure, heterodimer of LeuC and LeuD.

It catalyses the reaction (2R,3S)-3-isopropylmalate = (2S)-2-isopropylmalate. The protein operates within amino-acid biosynthesis; L-leucine biosynthesis; L-leucine from 3-methyl-2-oxobutanoate: step 2/4. Functionally, catalyzes the isomerization between 2-isopropylmalate and 3-isopropylmalate, via the formation of 2-isopropylmaleate. The polypeptide is 3-isopropylmalate dehydratase small subunit (Leifsonia xyli subsp. xyli (strain CTCB07)).